We begin with the raw amino-acid sequence, 105 residues long: Ferredoxin--nitrite reductase, chloroplastic (105 aa).

Residues C28 and C32 each coordinate [4Fe-4S] cluster. Residue C32 coordinates siroheme.

The protein belongs to the nitrite and sulfite reductase 4Fe-4S domain family. Monomer. Requires siroheme as cofactor. The cofactor is [4Fe-4S] cluster. Highest expression in roots and hypocotyls. Some expression in cotyledonary whorls.

Its subcellular location is the plastid. The protein localises to the chloroplast. It catalyses the reaction 6 oxidized [2Fe-2S]-[ferredoxin] + NH4(+) + 2 H2O = nitrite + 6 reduced [2Fe-2S]-[ferredoxin] + 8 H(+). The protein operates within nitrogen metabolism; nitrate reduction (assimilation). The polypeptide is Ferredoxin--nitrite reductase, chloroplastic (NIR) (Pinus sylvestris (Scotch pine)).